A 109-amino-acid chain; its full sequence is Nucleoid-associated protein Sama_1311 (109 aa).

This sequence belongs to the YbaB/EbfC family. In terms of assembly, homodimer.

It is found in the cytoplasm. Its subcellular location is the nucleoid. In terms of biological role, binds to DNA and alters its conformation. May be involved in regulation of gene expression, nucleoid organization and DNA protection. The chain is Nucleoid-associated protein Sama_1311 from Shewanella amazonensis (strain ATCC BAA-1098 / SB2B).